Here is a 193-residue protein sequence, read N- to C-terminus: 7-methyl-GTP pyrophosphatase (193 aa).

The active-site Proton acceptor is the Asp69.

It belongs to the Maf family. YceF subfamily. The cofactor is a divalent metal cation.

It is found in the cytoplasm. It catalyses the reaction N(7)-methyl-GTP + H2O = N(7)-methyl-GMP + diphosphate + H(+). Functionally, nucleoside triphosphate pyrophosphatase that hydrolyzes 7-methyl-GTP (m(7)GTP). May have a dual role in cell division arrest and in preventing the incorporation of modified nucleotides into cellular nucleic acids. The chain is 7-methyl-GTP pyrophosphatase from Chromohalobacter salexigens (strain ATCC BAA-138 / DSM 3043 / CIP 106854 / NCIMB 13768 / 1H11).